The following is a 445-amino-acid chain: 23S rRNA (uracil(1939)-C(5))-methyltransferase RlmD (445 aa).

Residues 12-70 enclose the TRAM domain; the sequence is SKQLSSKLSLNVTQLDHLGAGIAHHQGKIVFINGALPGETVQVQLTEQKKKFSRAKLLK. Positions 83, 89, 92, and 171 each coordinate [4Fe-4S] cluster. The S-adenosyl-L-methionine site is built by Gln278, Phe307, Asn312, Glu328, Asp355, and Asp375. The active-site Nucleophile is the Cys401.

It belongs to the class I-like SAM-binding methyltransferase superfamily. RNA M5U methyltransferase family. RlmD subfamily.

The enzyme catalyses uridine(1939) in 23S rRNA + S-adenosyl-L-methionine = 5-methyluridine(1939) in 23S rRNA + S-adenosyl-L-homocysteine + H(+). Its function is as follows. Catalyzes the formation of 5-methyl-uridine at position 1939 (m5U1939) in 23S rRNA. This Shewanella piezotolerans (strain WP3 / JCM 13877) protein is 23S rRNA (uracil(1939)-C(5))-methyltransferase RlmD.